Here is a 142-residue protein sequence, read N- to C-terminus: Hemoglobin subunit alpha-3 (142 aa).

A Globin domain is found at 2–142 (TLTDSDKAAV…VATVLTSKYR (141 aa)). Position 59 (His-59) interacts with O2. His-88 contacts heme b.

It belongs to the globin family. Heterotetramer of two alpha chains and two beta chains. Red blood cells.

In terms of biological role, this is a larval (tadpole) alpha-globin. This is Hemoglobin subunit alpha-3 (hba3) from Xenopus laevis (African clawed frog).